A 148-amino-acid chain; its full sequence is Large ribosomal subunit protein bL9 (148 aa).

It belongs to the bacterial ribosomal protein bL9 family.

In terms of biological role, binds to the 23S rRNA. The protein is Large ribosomal subunit protein bL9 of Marinobacter nauticus (strain ATCC 700491 / DSM 11845 / VT8) (Marinobacter aquaeolei).